A 274-amino-acid chain; its full sequence is Chromatin modification-related protein YNG2 (274 aa).

The tract at residues 121-194 (EDEMESGPDF…ASTEREGTLD (74 aa)) is disordered. The span at 166 to 180 (THREKSYNKGDDTAD) shows a compositional bias: basic and acidic residues. Residues 215-264 (NLYCFCQRVSFGEMVACDGPNCKYEWFHYECVNLTEPPKGTWYCPDCKQE) form a PHD-type zinc finger. Positions 218, 220, 231, 236, 242, 245, 258, and 261 each coordinate Zn(2+).

The protein belongs to the ING family. Interacts with H3K4me3 and to a lesser extent with H3K4me2. Component of the NuA4 histone acetyltransferase complex.

Its subcellular location is the nucleus. Functionally, component of the NuA4 histone acetyltransferase complex which is involved in transcriptional activation of selected genes principally by acetylation of nucleosomal histone H4 and H2A. The NuA4 complex is also involved in DNA repair. Involved in cell cycle progression and meiosis. This chain is Chromatin modification-related protein YNG2 (YNG2), found in Candida glabrata (strain ATCC 2001 / BCRC 20586 / JCM 3761 / NBRC 0622 / NRRL Y-65 / CBS 138) (Yeast).